A 1206-amino-acid polypeptide reads, in one-letter code: Cilia- and flagella-associated protein 157 (1206 aa).

4 disordered regions span residues 26–52, 79–109, 125–173, and 327–405; these read GGGG…GRDL, RAEQ…QQAP, EATC…RGPL, and GSGK…EEDW. Composition is skewed to low complexity over residues 88 to 109, 156 to 173, and 385 to 397; these read GRPQ…QQAP, AKAV…RGPL, and QQLG…QPGG. Coiled coils occupy residues 634-732, 799-833, and 876-903; these read TDEL…KTKD, TEKL…LARR, and LHLA…KTAE. 3 disordered regions span residues 936–990, 1011–1072, and 1168–1206; these read TTTN…DELS, LSHG…GATS, and PWGK…SLKV. Composition is skewed to low complexity over residues 951-973 and 1014-1035; these read AGAD…SSSA and GPLS…ALAG. Gly residues-rich tracts occupy residues 1037–1046 and 1058–1067; these read WGPGSPGGSR and SAGGMGGPQG. Polar residues-rich tracts occupy residues 1175-1184 and 1193-1206; these read QQPLTTTKHS and GPSN…SLKV.

The protein belongs to the CFAP157 family.

The protein resides in the cell projection. It is found in the cilium. Its subcellular location is the flagellum. In Chlamydomonas reinhardtii (Chlamydomonas smithii), this protein is Cilia- and flagella-associated protein 157.